The following is a 70-amino-acid chain: Small ribosomal subunit protein bS21 (70 aa).

Belongs to the bacterial ribosomal protein bS21 family.

The polypeptide is Small ribosomal subunit protein bS21 (Delftia acidovorans (strain DSM 14801 / SPH-1)).